The sequence spans 420 residues: Probable acetate kinase (420 aa).

Position 10 (N10) interacts with Mg(2+). Position 17 (K17) interacts with ATP. Residue R97 coordinates substrate. The active-site Proton donor/acceptor is the D153. 213–217 (HIGSG) provides a ligand contact to ATP. E403 is a Mg(2+) binding site.

It belongs to the acetokinase family. It depends on Mg(2+) as a cofactor.

It catalyses the reaction acetate + ATP = acetyl phosphate + ADP. Its pathway is metabolic intermediate biosynthesis; acetyl-CoA biosynthesis; acetyl-CoA from acetate: step 1/2. This is Probable acetate kinase from Emericella nidulans (strain FGSC A4 / ATCC 38163 / CBS 112.46 / NRRL 194 / M139) (Aspergillus nidulans).